A 342-amino-acid polypeptide reads, in one-letter code: Glycerol-3-phosphate dehydrogenase [NAD(P)+] (342 aa).

NADPH contacts are provided by serine 13, tryptophan 14, and lysine 108. Sn-glycerol 3-phosphate-binding residues include lysine 108, glycine 139, and serine 141. Alanine 143 provides a ligand contact to NADPH. Residues lysine 194, aspartate 247, serine 257, arginine 258, and asparagine 259 each coordinate sn-glycerol 3-phosphate. Catalysis depends on lysine 194, which acts as the Proton acceptor. Arginine 258 contacts NADPH. Valine 282 and glutamate 284 together coordinate NADPH.

Belongs to the NAD-dependent glycerol-3-phosphate dehydrogenase family.

The protein resides in the cytoplasm. The catalysed reaction is sn-glycerol 3-phosphate + NAD(+) = dihydroxyacetone phosphate + NADH + H(+). The enzyme catalyses sn-glycerol 3-phosphate + NADP(+) = dihydroxyacetone phosphate + NADPH + H(+). Its pathway is membrane lipid metabolism; glycerophospholipid metabolism. Functionally, catalyzes the reduction of the glycolytic intermediate dihydroxyacetone phosphate (DHAP) to sn-glycerol 3-phosphate (G3P), the key precursor for phospholipid synthesis. The chain is Glycerol-3-phosphate dehydrogenase [NAD(P)+] from Lactococcus lactis subsp. cremoris (strain MG1363).